A 1036-amino-acid chain; its full sequence is Zinc finger protein 532 (1036 aa).

Disordered regions lie at residues 26–92 (PKAA…LHNG), 106–206 (GAKS…EAES), 220–265 (RKAE…PSSK), and 281–362 (AASD…KVRI). Over residues 32 to 52 (SGHDDHESHIKQNAHVDDDSH) the composition is skewed to basic and acidic residues. Phosphoserine is present on residues Ser-130, Ser-133, and Ser-134. Residues 136 to 151 (EEFEDDEKIEVDDPPD) show a composition bias toward acidic residues. Residue Lys-175 is modified to N6-acetyllysine. Positions 182 to 193 (ENSSKTGVSTSG) are enriched in polar residues. Basic and acidic residues-rich tracts occupy residues 194–205 (HTDKNKVKREAE) and 220–249 (RKAE…EKSD). A compositionally biased stretch (low complexity) spans 253–265 (AAAASSKTKPSSK). Residues 302–314 (EVNDSPKAADKSP) are compositionally biased toward basic and acidic residues. Ser-306 and Ser-313 each carry phosphoserine. Over residues 336–353 (SVSSENSSKGSPSSPVGS) the composition is skewed to low complexity. Ser-433 carries the phosphoserine modification. Glycyl lysine isopeptide (Lys-Gly) (interchain with G-Cter in SUMO2) cross-links involve residues Lys-458 and Lys-515. The C2H2-type 1; degenerate zinc-finger motif lies at 615-634 (YKCLECGDAFALEKSLSQHY). A C2H2-type 2; degenerate zinc finger spans residues 751 to 775 (LKCLECNEVFQDEPSLATHFQHAAD). Residues 784-807 (HPCRQCDKSFSSSHSLCRHNRIKH) form a C2H2-type 3 zinc finger. A C2H2-type 4; degenerate zinc finger spans residues 814–840 (YACSHCPDSRRTFTKRLMLERHIQLMH). A disordered region spans residues 847 to 877 (VKELSDDAGDVTNDEEEEAEIKEDAKVPSPK). Positions 852 to 867 (DDAGDVTNDEEEEAEI) are enriched in acidic residues. A compositionally biased stretch (basic and acidic residues) spans 868–877 (KEDAKVPSPK). The residue at position 875 (Ser-875) is a Phosphoserine. Residues Lys-879 and Lys-902 each participate in a glycyl lysine isopeptide (Lys-Gly) (interchain with G-Cter in SUMO2) cross-link. 2 consecutive C2H2-type zinc fingers follow at residues 938–961 (HQCR…FIVH) and 999–1021 (RKCK…MRTH). The tract at residues 966–1000 (PQPVSKQNGAGEDSQQENKPSPEDEAAEGAASDRK) is disordered.

The protein belongs to the krueppel C2H2-type zinc-finger protein family.

It localises to the nucleus. Its function is as follows. May be involved in transcriptional regulation. This is Zinc finger protein 532 (Znf532) from Mus musculus (Mouse).